Reading from the N-terminus, the 432-residue chain is Cysteine desulfurase, mitosomal (432 aa).

Residues 102 to 103 (AT), Q212, and 232 to 234 (CAH) contribute to the pyridoxal 5'-phosphate site. K235 bears the N6-(pyridoxal phosphate)lysine mark. A pyridoxal 5'-phosphate-binding site is contributed by T272. C357 acts as the Cysteine persulfide intermediate in catalysis. C357 lines the [2Fe-2S] cluster pocket.

It belongs to the class-V pyridoxal-phosphate-dependent aminotransferase family. NifS/IscS subfamily. It depends on pyridoxal 5'-phosphate as a cofactor.

The protein resides in the mitosome. It catalyses the reaction (sulfur carrier)-H + L-cysteine = (sulfur carrier)-SH + L-alanine. Functionally, catalyzes the removal of elemental sulfur from cysteine to produce alanine. It supplies the inorganic sulfur for iron-sulfur (Fe-S) clusters in mitosomes. The protein is Cysteine desulfurase, mitosomal of Encephalitozoon cuniculi (strain GB-M1) (Microsporidian parasite).